Reading from the N-terminus, the 137-residue chain is MAQAKKGGAPKKGQKTRRREKKNVPHGAAHIKSTFNNTIVSITDPQGNVIAWASSGHVGFKGSRKSTPFAAQLAAENAARKAQEHGVKKVDVFVKGPGSGRETAIRSLQAAGLEVGAISDVTPQPHNGCRPPKRRRV.

The tract at residues 1-30 is disordered; sequence MAQAKKGGAPKKGQKTRRREKKNVPHGAAH. Over residues 8–21 the composition is skewed to basic residues; the sequence is GAPKKGQKTRRREK.

The protein belongs to the universal ribosomal protein uS11 family. As to quaternary structure, part of the 30S ribosomal subunit. Interacts with proteins S7 and S18. Binds to IF-3.

Functionally, located on the platform of the 30S subunit, it bridges several disparate RNA helices of the 16S rRNA. Forms part of the Shine-Dalgarno cleft in the 70S ribosome. This is Small ribosomal subunit protein uS11 from Mycolicibacterium vanbaalenii (strain DSM 7251 / JCM 13017 / BCRC 16820 / KCTC 9966 / NRRL B-24157 / PYR-1) (Mycobacterium vanbaalenii).